A 137-amino-acid polypeptide reads, in one-letter code: Crustacean calcium-binding protein 23 (137 aa).

3 EF-hand domains span residues 27 to 48 (RDSSWTLSKEELSRGVSQFGLD), 62 to 97 (EKKAAVEAAFKHLDKTGDGVVTVEDIKGVYSAKVVK), and 100 to 135 (ATEEEILKKFLNMFESSTSVDGKVTKKEFLDYYSGL).

Monomer or disulfide-linked dimers.

Possibly acts as a regulatory protein and not as a calcium buffer or transport protein. This Homarus americanus (American lobster) protein is Crustacean calcium-binding protein 23.